We begin with the raw amino-acid sequence, 185 residues long: Ribosome-recycling factor (185 aa).

This sequence belongs to the RRF family.

It localises to the cytoplasm. Functionally, responsible for the release of ribosomes from messenger RNA at the termination of protein biosynthesis. May increase the efficiency of translation by recycling ribosomes from one round of translation to another. The protein is Ribosome-recycling factor of Pseudomonas putida (strain W619).